Reading from the N-terminus, the 151-residue chain is Small ribosomal subunit protein uS15 (151 aa).

The protein belongs to the universal ribosomal protein uS15 family.

This Spodoptera frugiperda (Fall armyworm) protein is Small ribosomal subunit protein uS15 (RpS13).